A 406-amino-acid chain; its full sequence is 4-hydroxy-3-methylbut-2-en-1-yl diphosphate synthase (flavodoxin) (406 aa).

4 residues coordinate [4Fe-4S] cluster: Cys-297, Cys-300, Cys-343, and Glu-350.

It belongs to the IspG family. Requires [4Fe-4S] cluster as cofactor.

It carries out the reaction (2E)-4-hydroxy-3-methylbut-2-enyl diphosphate + oxidized [flavodoxin] + H2O + 2 H(+) = 2-C-methyl-D-erythritol 2,4-cyclic diphosphate + reduced [flavodoxin]. The protein operates within isoprenoid biosynthesis; isopentenyl diphosphate biosynthesis via DXP pathway; isopentenyl diphosphate from 1-deoxy-D-xylulose 5-phosphate: step 5/6. In terms of biological role, converts 2C-methyl-D-erythritol 2,4-cyclodiphosphate (ME-2,4cPP) into 1-hydroxy-2-methyl-2-(E)-butenyl 4-diphosphate. The chain is 4-hydroxy-3-methylbut-2-en-1-yl diphosphate synthase (flavodoxin) from Thermus thermophilus (strain ATCC 27634 / DSM 579 / HB8).